The following is a 226-amino-acid chain: Octanoyltransferase (226 aa).

One can recognise a BPL/LPL catalytic domain in the interval 31–226 (PETPDALWIC…SQKLGTYLAP (196 aa)). Substrate is bound by residues 70–77 (RGGQVTFH), 159–161 (ALG), and 172–174 (GVA). Residue Cys190 is the Acyl-thioester intermediate of the active site.

This sequence belongs to the LipB family.

Its subcellular location is the cytoplasm. The enzyme catalyses octanoyl-[ACP] + L-lysyl-[protein] = N(6)-octanoyl-L-lysyl-[protein] + holo-[ACP] + H(+). It functions in the pathway protein modification; protein lipoylation via endogenous pathway; protein N(6)-(lipoyl)lysine from octanoyl-[acyl-carrier-protein]: step 1/2. In terms of biological role, catalyzes the transfer of endogenously produced octanoic acid from octanoyl-acyl-carrier-protein onto the lipoyl domains of lipoate-dependent enzymes. Lipoyl-ACP can also act as a substrate although octanoyl-ACP is likely to be the physiological substrate. The chain is Octanoyltransferase from Variovorax paradoxus (strain S110).